Consider the following 238-residue polypeptide: Zinc-finger homeodomain protein 11 (238 aa).

Residues 12–59 (YRECMRNHAAKLGTYANDGCCEYTPDDGHPAGLLCAACGCHRNFHRKD) form a ZF-HD dimerization-type; degenerate zinc finger. A DNA-binding region (homeobox) is located at residues 119–188 (RRRTRTKFTE…NHKAGGGGGG (70 aa)). A compositionally biased stretch (gly residues) spans 183 to 200 (GGGGGGGGSGGPGAGGGA). Residues 183 to 238 (GGGGGGGGSGGPGAGGGAQTSSSTTRGGGDVGVGLSPAMGGDGEDDEEVRGSEMCM) are disordered.

As to quaternary structure, homo- and heterodimer with other ZFHD proteins.

The protein localises to the nucleus. In terms of biological role, putative transcription factor. This Oryza sativa subsp. indica (Rice) protein is Zinc-finger homeodomain protein 11 (ZHD11).